A 456-amino-acid polypeptide reads, in one-letter code: Glutamyl-tRNA(Gln) amidotransferase subunit A (456 aa).

Residues Lys-74 and Ser-149 each act as charge relay system in the active site. The active-site Acyl-ester intermediate is the Ser-173.

It belongs to the amidase family. GatA subfamily. Heterotrimer of A, B and C subunits.

The enzyme catalyses L-glutamyl-tRNA(Gln) + L-glutamine + ATP + H2O = L-glutaminyl-tRNA(Gln) + L-glutamate + ADP + phosphate + H(+). In terms of biological role, allows the formation of correctly charged Gln-tRNA(Gln) through the transamidation of misacylated Glu-tRNA(Gln) in organisms which lack glutaminyl-tRNA synthetase. The reaction takes place in the presence of glutamine and ATP through an activated gamma-phospho-Glu-tRNA(Gln). This Methanobrevibacter smithii (strain ATCC 35061 / DSM 861 / OCM 144 / PS) protein is Glutamyl-tRNA(Gln) amidotransferase subunit A.